Here is a 282-residue protein sequence, read N- to C-terminus: ATP synthase gamma chain (282 aa).

The protein belongs to the ATPase gamma chain family. In terms of assembly, F-type ATPases have 2 components, CF(1) - the catalytic core - and CF(0) - the membrane proton channel. CF(1) has five subunits: alpha(3), beta(3), gamma(1), delta(1), epsilon(1). CF(0) has three main subunits: a, b and c.

It is found in the cell membrane. In terms of biological role, produces ATP from ADP in the presence of a proton gradient across the membrane. The gamma chain is believed to be important in regulating ATPase activity and the flow of protons through the CF(0) complex. The protein is ATP synthase gamma chain of Clostridium botulinum (strain 657 / Type Ba4).